We begin with the raw amino-acid sequence, 462 residues long: Argininosuccinate lyase (462 aa).

It belongs to the lyase 1 family. Argininosuccinate lyase subfamily.

It localises to the cytoplasm. The catalysed reaction is 2-(N(omega)-L-arginino)succinate = fumarate + L-arginine. It functions in the pathway amino-acid biosynthesis; L-arginine biosynthesis; L-arginine from L-ornithine and carbamoyl phosphate: step 3/3. The polypeptide is Argininosuccinate lyase (Streptococcus agalactiae serotype Ia (strain ATCC 27591 / A909 / CDC SS700)).